The following is a 56-amino-acid chain: Prokaryotic ubiquitin-like protein UBact (56 aa).

Positions 1-28 (MPQDQQRKKQFDPNPNRDDSQRKTPVDK) are enriched in basic and acidic residues. The tract at residues 1–33 (MPQDQQRKKQFDPNPNRDDSQRKTPVDKEIDDI) is disordered. Deamidated glutamine is present on Q56. Residue Q56 forms an Isoglutamyl lysine isopeptide (Gln-Lys) (interchain with K-? in acceptor proteins) linkage.

This sequence belongs to the ubiquitin-like protein UBact family. In terms of processing, may be modified by deamidation of its C-terminal glutamine to glutamate by the adjacently encoded deamidase. This could be a prerequisite to the subsequent conjugation, as shown in the other prokaryotic ubiquitin-like protein Pup.

May function as a protein modifier covalently attached to lysine residues of substrate proteins. This may serve to target the modified proteins for degradation by proteasomes. In Yanofskybacteria sp. (strain GW2011_GWA1_39_13), this protein is Prokaryotic ubiquitin-like protein UBact.